The chain runs to 387 residues: MATMITNLRRDLIEEIISRVPLRSMKAVRLTCKSWNNISKSEIFTKMQIDKATTREGKTMMISVMPHNLSLMSVAVDDVDPSVEFKGQLSFLCNQVSIHKVIHCEGLLLCFLKDHTRVVVWNPYSGQTRWVKLRYPHPPSPSKWDWFRYALGYEDKGSCRSVKFLRFLDYLPEEPENQNVCYEIYDFDSDLWTTLDVTSHSWICYSSCGVFLKGNAYWPVVKSSSEANIDHIIYFDFTRESFGPPLPLPFGATDRGYSYVNLSCVKEEKLAAFFQHYISYKYEFEIWVTTKIEAEMVSWSKFLRMDLGPNIDIPITFFIDEEKKVFMGFEHREYPKRFINIIGEAKYLRKLDLQVPQGQYCCPPLCSYVPSSIQIKKPALRQKDRAK.

Positions 2 to 47 constitute an F-box domain; that stretch reads ATMITNLRRDLIEEIISRVPLRSMKAVRLTCKSWNNISKSEIFTKM.

This chain is F-box protein At5g41490, found in Arabidopsis thaliana (Mouse-ear cress).